The sequence spans 44 residues: Alpha-amylase inhibitor WDAI-3 (44 aa).

Residues Cys-20 and Cys-41 are joined by a disulfide bond.

It belongs to the protease inhibitor I6 (cereal trypsin/alpha-amylase inhibitor) family. In terms of assembly, homodimer. The disulfide bonds are essential for the inhibitor activity. In terms of tissue distribution, endosperm.

It is found in the secreted. Alpha-amylase inhibitor. This chain is Alpha-amylase inhibitor WDAI-3 (IHA-B1-2), found in Triticum aestivum (Wheat).